Reading from the N-terminus, the 292-residue chain is 33 kDa chaperonin (292 aa).

2 disulfides stabilise this stretch: C230–C232 and C263–C266.

This sequence belongs to the HSP33 family. In terms of processing, under oxidizing conditions two disulfide bonds are formed involving the reactive cysteines. Under reducing conditions zinc is bound to the reactive cysteines and the protein is inactive.

It localises to the cytoplasm. Functionally, redox regulated molecular chaperone. Protects both thermally unfolding and oxidatively damaged proteins from irreversible aggregation. Plays an important role in the bacterial defense system toward oxidative stress. The polypeptide is 33 kDa chaperonin (Cronobacter sakazakii (strain ATCC BAA-894) (Enterobacter sakazakii)).